A 119-amino-acid chain; its full sequence is C-C motif chemokine 24 (119 aa).

A signal peptide spans 1–26; sequence MAGSATIVAGLLLLVACACCIFPIDS. 2 disulfide bridges follow: cysteine 33–cysteine 58 and cysteine 34–cysteine 74. Asparagine 54 and asparagine 115 each carry an N-linked (GlcNAc...) asparagine glycan. Positions 96 to 119 are disordered; that stretch reads PSKGAKAVRTKFAVQRRRGNSTEV. Basic residues predominate over residues 101-119; sequence KAVRTKFAVQRRRGNSTEV.

The protein belongs to the intercrine beta (chemokine CC) family. Highest expression in jejunum and spleen. Lower levels found in liver and lung. No expression detected in kidney, thymus, brain or testis.

Its subcellular location is the secreted. In terms of biological role, chemotactic for resting T-lymphocytes, and eosinophils. Has lower chemotactic activity for neutrophils but none for monocytes and activated lymphocytes. Is a strong suppressor of colony formation by a multipotential hematopoietic progenitor cell line. Binds to CCR3. This chain is C-C motif chemokine 24, found in Mus musculus (Mouse).